The following is a 183-amino-acid chain: Adenylate kinase (183 aa).

7 to 15 (GVAGVGKTT) contacts ATP.

The protein belongs to the archaeal adenylate kinase family.

Its subcellular location is the cytoplasm. The enzyme catalyses AMP + ATP = 2 ADP. This Thermoplasma acidophilum (strain ATCC 25905 / DSM 1728 / JCM 9062 / NBRC 15155 / AMRC-C165) protein is Adenylate kinase (adkA).